Reading from the N-terminus, the 429-residue chain is GTPase Obg (429 aa).

An Obg domain is found at 1–158 (MFADSAKIFI…LNVTLELKVI (158 aa)). In terms of domain architecture, OBG-type G spans 159–333 (ADVGLVGFPN…LLYYVSDLLK (175 aa)). GTP-binding positions include 165–172 (GFPNVGKS), 190–194 (FTTLN), 212–215 (DIPG), 282–285 (NKTD), and 314–316 (SAV). Mg(2+)-binding residues include Ser-172 and Thr-192. Residues 350–429 (ENLVMSEPYT…MYGLEFDYYK (80 aa)) form the OCT domain.

Belongs to the TRAFAC class OBG-HflX-like GTPase superfamily. OBG GTPase family. In terms of assembly, monomer. Mg(2+) serves as cofactor.

It is found in the cytoplasm. In terms of biological role, an essential GTPase which binds GTP, GDP and possibly (p)ppGpp with moderate affinity, with high nucleotide exchange rates and a fairly low GTP hydrolysis rate. Plays a role in control of the cell cycle, stress response, ribosome biogenesis and in those bacteria that undergo differentiation, in morphogenesis control. The protein is GTPase Obg of Lachnoclostridium phytofermentans (strain ATCC 700394 / DSM 18823 / ISDg) (Clostridium phytofermentans).